The primary structure comprises 250 residues: Small ribosomal subunit protein uS2 (250 aa).

Residues 226 to 250 (DQQNRQELGEDLGAAVEPAAEEALA) form a disordered region. The span at 239–250 (AAVEPAAEEALA) shows a compositional bias: low complexity.

It belongs to the universal ribosomal protein uS2 family.

In Zymomonas mobilis subsp. mobilis (strain ATCC 31821 / ZM4 / CP4), this protein is Small ribosomal subunit protein uS2 (rpsB).